The chain runs to 257 residues: Small ribosomal subunit protein uS2 (257 aa).

This sequence belongs to the universal ribosomal protein uS2 family.

The chain is Small ribosomal subunit protein uS2 from Trichlorobacter lovleyi (strain ATCC BAA-1151 / DSM 17278 / SZ) (Geobacter lovleyi).